A 137-amino-acid chain; its full sequence is MILSFEYINSFNRLIPICDSCSNYPIGSYVATYIRLFGKNEFEEKGIYDDIVNISIENEFVGFDGIDAFIEGDKVRIGFYLYGKGDEPEDYDPEESEFEIIDRKELIYILKRWKVFIHKPITDPHYQEIIDTKEAYL.

This sequence belongs to the UPF0275 family.

The sequence is that of UPF0275 protein PM0489 from Pasteurella multocida (strain Pm70).